The chain runs to 261 residues: Proteasome subunit alpha (261 aa).

The segment at 242-261 is disordered; the sequence is NEENKKEEENREETKEKQEE.

The protein belongs to the peptidase T1A family. As to quaternary structure, the 20S proteasome core is composed of 14 alpha and 14 beta subunits that assemble into four stacked heptameric rings, resulting in a barrel-shaped structure. The two inner rings, each composed of seven catalytic beta subunits, are sandwiched by two outer rings, each composed of seven alpha subunits. The catalytic chamber with the active sites is on the inside of the barrel. Has a gated structure, the ends of the cylinder being occluded by the N-termini of the alpha-subunits. Is capped at one or both ends by the proteasome regulatory ATPase, PAN.

Its subcellular location is the cytoplasm. With respect to regulation, the formation of the proteasomal ATPase PAN-20S proteasome complex, via the docking of the C-termini of PAN into the intersubunit pockets in the alpha-rings, triggers opening of the gate for substrate entry. Interconversion between the open-gate and close-gate conformations leads to a dynamic regulation of the 20S proteasome proteolysis activity. Functionally, component of the proteasome core, a large protease complex with broad specificity involved in protein degradation. The M.jannaschii proteasome is able to cleave oligopeptides after Glu, Asp, Tyr, Phe, Trp, slightly after Arg, but not after Ala. Thus, displays caspase-like and chymotrypsin-like activities and low level of trypsin-like activity. This is Proteasome subunit alpha from Methanocaldococcus jannaschii (strain ATCC 43067 / DSM 2661 / JAL-1 / JCM 10045 / NBRC 100440) (Methanococcus jannaschii).